The sequence spans 665 residues: Probable potassium transport system protein Kup (665 aa).

A run of 12 helical transmembrane segments spans residues 15–35 (SFLIALGVVYGDIGTSPLYVM), 48–68 (ITPDFILGVLSLIFWTMTLLT), 100–120 (WLIIPAMVGGSALLADGMLTP), 147–167 (IIIIIVLVILSFLFFIQHFGT), 173–193 (IFGPVMFIWFAFLAILGIVNL), 219–239 (LGFFILGGVFLSTTGAEALYS), 251–271 (LTWPLVKICLLLNYFGQAAWI), 292–312 (MMPSWLLLFGVLISTLAAIIA), 348–368 (IYMPAINRILWIACIAIVLYF), 378–398 (YGLSITVTMLMTSILLFNYLL), 403–423 (PLPIALIILVFFGSLEFSFLI), and 431–451 (KGGFVSVLIALCILSIMYIWI).

This sequence belongs to the HAK/KUP transporter (TC 2.A.72) family.

It localises to the cell membrane. The enzyme catalyses K(+)(in) + H(+)(in) = K(+)(out) + H(+)(out). In terms of biological role, transport of potassium into the cell. Likely operates as a K(+):H(+) symporter. The protein is Probable potassium transport system protein Kup of Clostridium perfringens (strain ATCC 13124 / DSM 756 / JCM 1290 / NCIMB 6125 / NCTC 8237 / Type A).